The following is an 856-amino-acid chain: Mechanosensitive ion channel protein 6 (856 aa).

Disordered regions lie at residues 45 to 86 and 116 to 226; these read GEGN…DPPT and RGLT…PFAA. 2 stretches are compositionally biased toward basic and acidic residues: residues 70–85 and 129–140; these read QQKDEGFEFRRGEDPP and TKRDPVGRRDSR. Residues 155–168 show a composition bias toward polar residues; the sequence is SGNNAPIQRSSSTL. Ser211 is subject to Phosphoserine. Acidic residues predominate over residues 217–226; sequence EEEEDDPFAA. The next 4 helical transmembrane spans lie at 242-262, 283-303, 323-343, and 360-380; these read IVLEWLSLILIIAGFVCTLAI, LVLICGRLVSSWIVKIVVFFI, AVQNCLWLGLVLLAWHFLFDE, and IFVCLLVGFLLWLVKTLLVKV. Position 462 is a phosphoserine (Ser462). A run of 2 helical transmembrane segments spans residues 615-635 and 651-671; these read MVNIVVGIIILVIWLIILGIT and AFIFGNMCKIVFESIIYLFVI.

It belongs to the MscS (TC 1.A.23) family.

The protein localises to the membrane. Functionally, mechanosensitive channel that opens in response to stretch forces in the membrane lipid bilayer. In Arabidopsis thaliana (Mouse-ear cress), this protein is Mechanosensitive ion channel protein 6 (MSL6).